We begin with the raw amino-acid sequence, 314 residues long: tRNA dimethylallyltransferase (314 aa).

A disordered region spans residues 1-25 (MAEEPQRSPAPTSPFAFTVPSNSLS). 40-47 (GPTASGKS) contacts ATP. 42 to 47 (TASGKS) is a binding site for substrate.

It belongs to the IPP transferase family. As to quaternary structure, monomer. The cofactor is Mg(2+).

It carries out the reaction adenosine(37) in tRNA + dimethylallyl diphosphate = N(6)-dimethylallyladenosine(37) in tRNA + diphosphate. In terms of biological role, catalyzes the transfer of a dimethylallyl group onto the adenine at position 37 in tRNAs that read codons beginning with uridine, leading to the formation of N6-(dimethylallyl)adenosine (i(6)A). This Cereibacter sphaeroides (strain ATCC 17023 / DSM 158 / JCM 6121 / CCUG 31486 / LMG 2827 / NBRC 12203 / NCIMB 8253 / ATH 2.4.1.) (Rhodobacter sphaeroides) protein is tRNA dimethylallyltransferase.